A 206-amino-acid polypeptide reads, in one-letter code: FMN-dependent NADH:quinone oxidoreductase 1 (206 aa).

Residues Ser-9, 15 to 17 (SVS), and 139 to 142 (SRGG) contribute to the FMN site.

The protein belongs to the azoreductase type 1 family. As to quaternary structure, homodimer. It depends on FMN as a cofactor.

The catalysed reaction is 2 a quinone + NADH + H(+) = 2 a 1,4-benzosemiquinone + NAD(+). The enzyme catalyses N,N-dimethyl-1,4-phenylenediamine + anthranilate + 2 NAD(+) = 2-(4-dimethylaminophenyl)diazenylbenzoate + 2 NADH + 2 H(+). Its function is as follows. Quinone reductase that provides resistance to thiol-specific stress caused by electrophilic quinones. Functionally, also exhibits azoreductase activity. Catalyzes the reductive cleavage of the azo bond in aromatic azo compounds to the corresponding amines. This chain is FMN-dependent NADH:quinone oxidoreductase 1, found in Cupriavidus pinatubonensis (strain JMP 134 / LMG 1197) (Cupriavidus necator (strain JMP 134)).